Here is a 142-residue protein sequence, read N- to C-terminus: Nucleoside diphosphate kinase (142 aa).

ATP-binding residues include lysine 11, phenylalanine 59, arginine 87, threonine 93, arginine 104, and asparagine 114. Residue histidine 117 is the Pros-phosphohistidine intermediate of the active site.

Belongs to the NDK family. In terms of assembly, homotetramer. Mg(2+) serves as cofactor.

The protein resides in the cytoplasm. It carries out the reaction a 2'-deoxyribonucleoside 5'-diphosphate + ATP = a 2'-deoxyribonucleoside 5'-triphosphate + ADP. It catalyses the reaction a ribonucleoside 5'-diphosphate + ATP = a ribonucleoside 5'-triphosphate + ADP. Its function is as follows. Major role in the synthesis of nucleoside triphosphates other than ATP. The ATP gamma phosphate is transferred to the NDP beta phosphate via a ping-pong mechanism, using a phosphorylated active-site intermediate. The protein is Nucleoside diphosphate kinase of Salinibacter ruber (strain DSM 13855 / M31).